The following is a 241-amino-acid chain: 3-oxoacyl-[acyl-carrier-protein] reductase FabG (241 aa).

NADP(+) contacts are provided by residues 13–16, Ser-38, 57–58, and Asn-83; these read GASS and EV. Ser-135 serves as a coordination point for substrate. Tyr-148 serves as the catalytic Proton acceptor. Residues 148-152 and Ile-181 contribute to the NADP(+) site; that span reads YCASK.

This sequence belongs to the short-chain dehydrogenases/reductases (SDR) family. In terms of assembly, homotetramer.

It catalyses the reaction a (3R)-hydroxyacyl-[ACP] + NADP(+) = a 3-oxoacyl-[ACP] + NADPH + H(+). It functions in the pathway lipid metabolism; fatty acid biosynthesis. Catalyzes the NADPH-dependent reduction of beta-ketoacyl-ACP substrates to beta-hydroxyacyl-ACP products, the first reductive step in the elongation cycle of fatty acid biosynthesis. This chain is 3-oxoacyl-[acyl-carrier-protein] reductase FabG (fabG), found in Rickettsia prowazekii (strain Madrid E).